Reading from the N-terminus, the 298-residue chain is Protoheme IX farnesyltransferase (298 aa).

Transmembrane regions (helical) follow at residues Ile-26 to Pro-46, Leu-48 to Ile-68, Phe-110 to Phe-130, Ile-147 to Gly-167, Val-174 to Phe-194, Ile-220 to Val-240, Leu-243 to Leu-263, and Thr-276 to Thr-296.

The protein belongs to the UbiA prenyltransferase family. Protoheme IX farnesyltransferase subfamily. Interacts with CtaA.

It is found in the cell membrane. It catalyses the reaction heme b + (2E,6E)-farnesyl diphosphate + H2O = Fe(II)-heme o + diphosphate. It participates in porphyrin-containing compound metabolism; heme O biosynthesis; heme O from protoheme: step 1/1. Functionally, converts heme B (protoheme IX) to heme O by substitution of the vinyl group on carbon 2 of heme B porphyrin ring with a hydroxyethyl farnesyl side group. The sequence is that of Protoheme IX farnesyltransferase from Symbiobacterium thermophilum (strain DSM 24528 / JCM 14929 / IAM 14863 / T).